A 182-amino-acid chain; its full sequence is ATP-dependent protease subunit HslV (182 aa).

Thr12 is a catalytic residue. Residues Ala167, Cys170, and Thr173 each contribute to the Na(+) site.

It belongs to the peptidase T1B family. HslV subfamily. A double ring-shaped homohexamer of HslV is capped on each side by a ring-shaped HslU homohexamer. The assembly of the HslU/HslV complex is dependent on binding of ATP.

It is found in the cytoplasm. It carries out the reaction ATP-dependent cleavage of peptide bonds with broad specificity.. Allosterically activated by HslU binding. Its function is as follows. Protease subunit of a proteasome-like degradation complex believed to be a general protein degrading machinery. This is ATP-dependent protease subunit HslV from Chlorobium limicola (strain DSM 245 / NBRC 103803 / 6330).